Here is a 137-residue protein sequence, read N- to C-terminus: Large-conductance mechanosensitive channel (137 aa).

A run of 2 helical transmembrane segments spans residues 15-35 (VDLA…TSLV) and 81-101 (GKFI…FFVI).

This sequence belongs to the MscL family. Homopentamer.

It localises to the cell inner membrane. Its function is as follows. Channel that opens in response to stretch forces in the membrane lipid bilayer. May participate in the regulation of osmotic pressure changes within the cell. This chain is Large-conductance mechanosensitive channel, found in Hyphomonas neptunium (strain ATCC 15444).